We begin with the raw amino-acid sequence, 685 residues long: Sodium-dependent phosphate transporter 1 (685 aa).

6 helical membrane passes run 25–45, 66–86, 106–126, 162–182, 201–221, and 234–254; these read FLWMLVLGFVIAFVLAFSVGA, ACILASIFETVGSVLLGAKVS, LMAGSISAMFGSAVWQLAASF, IVLSWFISPLLSGIMSALLFY, ALPIFYACTIGVNLFSIMYSG, and GIILISVGCAVLCALVVWFFV. Residues 482 to 492 show a composition bias toward acidic residues; that stretch reads VEAEEQEEGSI. Residues 482-513 form a disordered region; it reads VEAEEQEEGSIEDVATDRKSSSSSLEERHDQD. Residues 496–513 show a composition bias toward basic and acidic residues; sequence ATDRKSSSSSLEERHDQD. 4 consecutive transmembrane segments (helical) span residues 517-537, 565-585, 606-626, and 656-676; these read VSLLFQFLQILTACFGSFAHG, ATPIWLLLYGGVGICIGLWVW, FSIELASALTVVIASNVGLPI, and IFLAWFVTVPISGLISAAIMA.

This sequence belongs to the inorganic phosphate transporter (PiT) (TC 2.A.20) family.

The protein localises to the cell membrane. It catalyses the reaction 2 Na(+)(out) + phosphate(out) = 2 Na(+)(in) + phosphate(in). In terms of biological role, sodium-phosphate symporter which preferentially transports the monovalent form of phosphate with a stoichiometry of two sodium ions per phosphate ion. The protein is Sodium-dependent phosphate transporter 1 (slc20a1) of Xenopus tropicalis (Western clawed frog).